A 78-amino-acid polypeptide reads, in one-letter code: FXYD domain-containing ion transport regulator 7 (78 aa).

Residues 1–22 lie on the Extracellular side of the membrane; sequence MATQVPTKVPQDPDPFYYDYDT. 2 O-linked (GlcNAc) threonine glycosylation sites follow: Thr-3 and Thr-7. Residues 23-43 form a helical membrane-spanning segment; the sequence is VQTVGMTLATILFLLGILIIL. Residues 44-78 are Cytoplasmic-facing; it reads SKKVKCRKADSRSESPTCKSCKSELPSSAPGGGGV. The tract at residues 52–78 is disordered; sequence ADSRSESPTCKSCKSELPSSAPGGGGV. Ser-71 is modified (phosphoserine).

The protein belongs to the FXYD family. In terms of assembly, regulatory subunit of the sodium/potassium-transporting ATPase which is composed of a catalytic alpha subunit, a non-catalytic beta subunit and an additional regulatory subunit. The regulatory subunit, a member of the FXYD protein family, modulates the enzymatic activity in a tissue- and isoform-specific way by changing affinities of the Na+/K+-ATPase toward Na(+), K(+) or ATP. Post-translationally, O-glycosylated; required for stabilization and translocation to the plasma membrane.

Its subcellular location is the cell membrane. Its function is as follows. Associates with and regulates the activity of the sodium/potassium-transporting ATPase (NKA) which catalyzes the hydrolysis of ATP coupled with the exchange of Na(+) and K(+) ions across the plasma membrane. Reduces the apparent affinity for external K(+), an effect that depends on the presence of external Na(+) and voltage. Increases the apparent affinity for intracellular Na(+). The polypeptide is FXYD domain-containing ion transport regulator 7 (FXYD7) (Bos taurus (Bovine)).